Here is a 282-residue protein sequence, read N- to C-terminus: Pantothenate synthetase (282 aa).

30–37 (MGYLHEGH) contributes to the ATP binding site. The active-site Proton donor is His-37. Gln-61 contacts (R)-pantoate. A beta-alanine-binding site is contributed by Gln-61. ATP is bound at residue 147–150 (GQKD). Position 153 (Gln-153) interacts with (R)-pantoate. Residues Val-176 and 184–187 (MSSR) each bind ATP.

Belongs to the pantothenate synthetase family. In terms of assembly, homodimer.

The protein resides in the cytoplasm. It catalyses the reaction (R)-pantoate + beta-alanine + ATP = (R)-pantothenate + AMP + diphosphate + H(+). The protein operates within cofactor biosynthesis; (R)-pantothenate biosynthesis; (R)-pantothenate from (R)-pantoate and beta-alanine: step 1/1. Catalyzes the condensation of pantoate with beta-alanine in an ATP-dependent reaction via a pantoyl-adenylate intermediate. The protein is Pantothenate synthetase of Pelotomaculum thermopropionicum (strain DSM 13744 / JCM 10971 / SI).